Consider the following 365-residue polypeptide: Putative outer membrane porin protein NmpC (365 aa).

Positions M1 to A23 are cleaved as a signal peptide.

The protein belongs to the Gram-negative porin family. In terms of assembly, homotrimer.

The protein resides in the cell outer membrane. The polypeptide is Putative outer membrane porin protein NmpC (nmpC) (Escherichia coli (strain K12)).